A 166-amino-acid chain; its full sequence is Regulator of ribonuclease activity A (166 aa).

It belongs to the RraA family. Homotrimer. Binds to both RNA-binding sites in the C-terminal region of Rne and to RhlB.

It is found in the cytoplasm. Globally modulates RNA abundance by binding to RNase E (Rne) and regulating its endonucleolytic activity. Can modulate Rne action in a substrate-dependent manner by altering the composition of the degradosome. Modulates RNA-binding and helicase activities of the degradosome. This is Regulator of ribonuclease activity A from Histophilus somni (strain 129Pt) (Haemophilus somnus).